We begin with the raw amino-acid sequence, 460 residues long: MYLKKHESKLLLIPKNEDKEDAGIIAVLTDRVPSVLIVRWFDLFCFGFAMCSYVLDFFSDIGIAIFHFWAGRHLSGALVLTFALIPSVIINIISMVWMLDDEMHWKRRAHPRRTGTFELNQKRFISLGKMITLCIFQMGPLFWYYKALYYGWMFTKNKKDDTDKEKRKFFMKMVEAERDATLLRFFEAFLESAPQLIIQGSIAANYFQNYYISGKYPYWLYFQAASLTLSIISISWSVVVQNRSLRMTRDDKVNIWPHEAVLQFCWRFLTILARIITLVAFVLLFGIYVVFLIFGHLIVTLVHVIFLQALHIEACTHIEKLLLLINAMIHLFTPFNMAEGNTRYRYLVAYTVEFIEMMIIFLLLPTPLDAFPLIEKIRIGVPATFFIGIFIMLIYYKFFHPNRRQDLEAPNVERNEKLVVSELNGIPSAAIEKAEHIEEIEEHSVPTTSESLLEEDECHN.

The Cytoplasmic portion of the chain corresponds to 1 to 45 (MYLKKHESKLLLIPKNEDKEDAGIIAVLTDRVPSVLIVRWFDLFC). Residues 46 to 66 (FGFAMCSYVLDFFSDIGIAIF) traverse the membrane as a helical segment. The Extracellular segment spans residues 67-77 (HFWAGRHLSGA). Residues 78 to 98 (LVLTFALIPSVIINIISMVWM) traverse the membrane as a helical segment. Residues 99-123 (LDDEMHWKRRAHPRRTGTFELNQKR) are Cytoplasmic-facing. The helical transmembrane segment at 124 to 144 (FISLGKMITLCIFQMGPLFWY) threads the bilayer. Over 145-219 (YKALYYGWMF…YYISGKYPYW (75 aa)) the chain is Extracellular. A helical transmembrane segment spans residues 220-240 (LYFQAASLTLSIISISWSVVV). The Cytoplasmic portion of the chain corresponds to 241–274 (QNRSLRMTRDDKVNIWPHEAVLQFCWRFLTILAR). Residues 275–295 (IITLVAFVLLFGIYVVFLIFG) form a helical membrane-spanning segment. Residues 296–320 (HLIVTLVHVIFLQALHIEACTHIEK) lie on the Extracellular side of the membrane. The chain crosses the membrane as a helical span at residues 321–341 (LLLLINAMIHLFTPFNMAEGN). The Cytoplasmic portion of the chain corresponds to 342–353 (TRYRYLVAYTVE). The chain crosses the membrane as a helical span at residues 354–374 (FIEMMIIFLLLPTPLDAFPLI). Residues 375 to 378 (EKIR) are Extracellular-facing. The helical transmembrane segment at 379 to 399 (IGVPATFFIGIFIMLIYYKFF) threads the bilayer. Over 400–460 (HPNRRQDLEA…SLLEEDECHN (61 aa)) the chain is Cytoplasmic.

The protein belongs to the XK family. In terms of processing, cleavage by ced-3 activates ced-8 function in promoting phosphatidylserine exposure at the surface of apoptotic cells.

Its subcellular location is the cell membrane. Its function is as follows. Acts downstream of ced-9 and caspase ced-3 to promote phosphatidylserine exposure on apoptotic cell surface, possibly by mediating phospholipid scrambling. Phosphatidylserine is a specific marker only present at the surface of apoptotic cells and acts as a specific signal for engulfment. Regulates apoptosis kinetics during embryonic development. Not required for engulfment of germ cell corpses. The sequence is that of Cell death abnormality protein 8 from Caenorhabditis briggsae.